The primary structure comprises 446 residues: Mitochondrial ribonuclease P protein 1 homolog (446 aa).

The transit peptide at 1-24 directs the protein to the mitochondrion; sequence MLKHFARWRLGSQLLKGCAAPVRQ. Residues 41–67 form a disordered region; sequence PQKKFVNPFSQPAPALSNDTISENKEE. S50 and S57 each carry phosphoserine. Position 60 is a phosphothreonine (T60). S62 carries the phosphoserine modification. The stretch at 119–158 forms a coiled coil; that stretch reads LWQIEMKKEADQRKKAERAKEAERRVAEMRKEREENTHII. The SAM-dependent MTase TRM10-type domain maps to 179-373; that stretch reads QNNRLTRAMQ…KHVPRRKVVQ (195 aa).

Belongs to the class IV-like SAM-binding methyltransferase superfamily. TRM10 family. Component of mitochondrial ribonuclease P, a complex composed of rswl/MRPP1, scu/MRPP2 and mldr/MRPP3.

It is found in the mitochondrion. Its function is as follows. Mitochondrial tRNA N1-methyltransferase involved in mitochondrial tRNA maturation. Component of mitochondrial ribonuclease P, a complex composed of rswl/MRPP1, scu/MRPP2 and mldr/MRPP3., which cleaves tRNA molecules in their 5'-ends. Essential for the structural and functional integrity of mitochondria. Function is essential for pupal development. The sequence is that of Mitochondrial ribonuclease P protein 1 homolog from Drosophila melanogaster (Fruit fly).